Here is a 939-residue protein sequence, read N- to C-terminus: AP-2 complex subunit alpha (939 aa).

Residues 623-633 show a composition bias toward basic and acidic residues; the sequence is RVPENEIRESK. The interval 623–660 is disordered; sequence RVPENEIRESKSPAPTSGPGSVLQNNVHVNNSHSKLNN. A compositionally biased stretch (polar residues) spans 635–660; the sequence is PAPTSGPGSVLQNNVHVNNSHSKLNN.

This sequence belongs to the adapter complexes large subunit family. As to quaternary structure, adaptor protein complex 2 (AP-2) is a heterotetramer composed of two large adaptins (alpha-type and beta-type subunits), a medium adaptin (mu-type subunit AP50) and a small adaptin (sigma-type subunit AP17).

It is found in the cell membrane. Its subcellular location is the membrane. It localises to the coated pit. Its function is as follows. Adaptins are components of the adapter complexes which link clathrin to receptors in coated vesicles. Clathrin-associated protein complexes are believed to interact with the cytoplasmic tails of membrane proteins, leading to their selection and concentration. Alpha adaptin is a subunit of the plasma membrane adapter. The protein is AP-2 complex subunit alpha of Drosophila pseudoobscura pseudoobscura (Fruit fly).